The primary structure comprises 193 residues: Corrinoid adenosyltransferase (193 aa).

ATP contacts are provided by residues 10–18, Lys-28, 137–142, and Asn-163; these read TRTGDDGTT and RRAERS.

This sequence belongs to the Cob(I)alamin adenosyltransferase family.

It localises to the cytoplasm. The enzyme catalyses 2 cob(II)yrinate a,c diamide + reduced [electron-transfer flavoprotein] + 2 ATP = 2 adenosylcob(III)yrinate a,c-diamide + 2 triphosphate + oxidized [electron-transfer flavoprotein] + 3 H(+). The catalysed reaction is 2 cob(II)alamin + reduced [electron-transfer flavoprotein] + 2 ATP = 2 adenosylcob(III)alamin + 2 triphosphate + oxidized [electron-transfer flavoprotein] + 3 H(+). The protein operates within cofactor biosynthesis; adenosylcobalamin biosynthesis; adenosylcobalamin from cob(II)yrinate a,c-diamide: step 2/7. This is Corrinoid adenosyltransferase from Mycobacterium bovis (strain ATCC BAA-935 / AF2122/97).